The chain runs to 511 residues: Maturase K (511 aa).

It belongs to the intron maturase 2 family. MatK subfamily.

It is found in the plastid. Its subcellular location is the chloroplast. Functionally, usually encoded in the trnK tRNA gene intron. Probably assists in splicing its own and other chloroplast group II introns. In Trifolium burchellianum (Wild clover), this protein is Maturase K.